A 382-amino-acid polypeptide reads, in one-letter code: Sulfate adenylyltransferase (382 aa).

It belongs to the sulfate adenylyltransferase family.

It carries out the reaction sulfate + ATP + H(+) = adenosine 5'-phosphosulfate + diphosphate. The protein operates within sulfur metabolism; hydrogen sulfide biosynthesis; sulfite from sulfate: step 1/3. The polypeptide is Sulfate adenylyltransferase (Ignicoccus hospitalis (strain KIN4/I / DSM 18386 / JCM 14125)).